The sequence spans 151 residues: Transcriptional repressor NrdR (151 aa).

Residues 3–34 (CPHCGNCDDKVMESRTLAQGDCIRRRRECLAC) fold into a zinc finger. The 93-residue stretch at 49 to 141 (FMVIKKDGRR…VYKQFSNLDE (93 aa)) folds into the ATP-cone domain.

This sequence belongs to the NrdR family. Zn(2+) serves as cofactor.

Functionally, negatively regulates transcription of bacterial ribonucleotide reductase nrd genes and operons by binding to NrdR-boxes. This chain is Transcriptional repressor NrdR, found in Treponema denticola (strain ATCC 35405 / DSM 14222 / CIP 103919 / JCM 8153 / KCTC 15104).